Reading from the N-terminus, the 742-residue chain is Alcohol dehydrogenase (quinone), dehydrogenase subunit (742 aa).

Positions 1 to 35 (MTRPASAKRRSLLGILAAGTICAAALPYAAVPARA) are cleaved as a signal peptide. Glu96 is a pyrroloquinoline quinone binding site. A disulfide bond links Cys142 and Cys143. Pyrroloquinoline quinone is bound at residue Arg148. Residue Glu216 coordinates Ca(2+). Thr278 contacts pyrroloquinoline quinone. Ca(2+)-binding residues include Asn298 and Asp343. The active-site Proton acceptor is the Asp343. Residues Lys370 and Ile584 each contribute to the pyrroloquinoline quinone site. A Cytochrome c domain is found at 636 to 715 (KVVDNGYFQY…AIRQYLIKRA (80 aa)). Heme c contacts are provided by Cys649, Cys652, His653, and Met692. Basic and acidic residues predominate over residues 722–732 (EVDARKNDKNI). A disordered region spans residues 722–742 (EVDARKNDKNIPENPTLGINP).

Belongs to the bacterial PQQ dehydrogenase family. In terms of assembly, the alcohol dehydrogenase multicomponent enzyme system is composed of a dehydrogenase subunit I (AdhA) and a cytochrome c subunit II (AdhB). It depends on pyrroloquinoline quinone as a cofactor. Ca(2+) serves as cofactor. Requires heme c as cofactor.

The protein localises to the cell membrane. It catalyses the reaction ethanol + a ubiquinone = a ubiquinol + acetaldehyde. Functionally, dehydrogenase component of the alcohol dehydrogenase multicomponent enzyme system which is involved in the production of acetic acid and in the ethanol oxidase respiratory chain. Quinohemoprotein alcohol dehydrogenase (ADH) catalyzes the oxidation of ethanol to acetaldehyde by transferring electrons to the ubiquinone embedded in the membrane phospholipids. The electrons transfer from ethanol to membranous ubiquinone occurs from pyrroloquinoline quinone (PQQ) to one heme c in subunit I (AdhA), and finally to two heme c in subunit II (AdhB). Besides ubiquinone reduction, ADH also has a ubiquinol (QH2) oxidation reaction which mediates electron transfer from ubiquinol to the non-energy generating bypass oxidase system. The electrons transfer occurs from ubiquinol (QH2) to the additional heme c within subunit II (AdhB). The protein is Alcohol dehydrogenase (quinone), dehydrogenase subunit of Acetobacter aceti.